The chain runs to 242 residues: Mannosyl-3-phosphoglycerate phosphatase (242 aa).

Catalysis depends on Asp8, which acts as the Nucleophile. Residues Asp8, Asp10, Ser169, and Asp204 each coordinate Mg(2+).

This sequence belongs to the HAD-like hydrolase superfamily. MPGP family. It depends on Mg(2+) as a cofactor.

It is found in the cytoplasm. It carries out the reaction 2-O-(alpha-D-mannosyl)-3-phosphoglycerate + H2O = (2R)-2-O-(alpha-D-mannosyl)-glycerate + phosphate. Its pathway is carbohydrate biosynthesis; 2-(alpha-D-mannosyl)-D-glycerate biosynthesis; 2-(alpha-D-mannosyl)-D-glycerate from GDP-alpha-D-mannose (MPG route): step 2/2. In terms of biological role, hydrolyzes mannosyl-3-phosphoglycerate (MPG) to form the osmolyte mannosylglycerate (MG). The sequence is that of Mannosyl-3-phosphoglycerate phosphatase from Pyrococcus furiosus (strain ATCC 43587 / DSM 3638 / JCM 8422 / Vc1).